Here is a 393-residue protein sequence, read N- to C-terminus: Golgi membrane protein 1 (393 aa).

Position 1 is an N-acetylmethionine (methionine 1). Residues 1-12 (MMGLGNGRRSMK) are Cytoplasmic-facing. Residues 13-35 (SPPLILAALVACVIVLGFNYWIA) traverse the membrane as a helical; Signal-anchor for type II membrane protein segment. Residues 36-393 (SSRSVELQTR…QVGIHIPQQA (358 aa)) lie on the Lumenal side of the membrane. Residues 40 to 183 (VELQTRIVEL…IEEVIRKRNE (144 aa)) are a coiled coil. Residues asparagine 109 and asparagine 144 are each glycosylated (N-linked (GlcNAc...) asparagine). Disordered regions lie at residues 180 to 247 (KRNE…QVQN) and 284 to 352 (HTQL…LAGN). Phosphoserine is present on serine 187. Polar residues-rich tracts occupy residues 192 to 201 (ETNNQHQQAL) and 227 to 247 (NKSQ…QVQN). A glycan (N-linked (GlcNAc...) asparagine) is linked at asparagine 227. Residues 294–320 (RPEEDSQYPEREQLVIRDRQEQQRASE) are compositionally biased toward basic and acidic residues. Acidic residues predominate over residues 330–339 (DEYDMDENEA).

The protein belongs to the GOLM family. Interacts with DYM. Post-translationally, glycosylated. Phosphorylation sites are present in the extracellular medium.

The protein resides in the golgi apparatus. It localises to the cis-Golgi network membrane. Its function is as follows. Unknown. Cellular response protein to viral infection. The polypeptide is Golgi membrane protein 1 (Golm1) (Mus musculus (Mouse)).